The chain runs to 264 residues: Hydroxyethylthiazole kinase (264 aa).

Residue M41 coordinates substrate. ATP contacts are provided by K117 and S163. G190 serves as a coordination point for substrate.

This sequence belongs to the Thz kinase family. The cofactor is Mg(2+).

The enzyme catalyses 5-(2-hydroxyethyl)-4-methylthiazole + ATP = 4-methyl-5-(2-phosphooxyethyl)-thiazole + ADP + H(+). Its pathway is cofactor biosynthesis; thiamine diphosphate biosynthesis; 4-methyl-5-(2-phosphoethyl)-thiazole from 5-(2-hydroxyethyl)-4-methylthiazole: step 1/1. Functionally, catalyzes the phosphorylation of the hydroxyl group of 4-methyl-5-beta-hydroxyethylthiazole (THZ). The sequence is that of Hydroxyethylthiazole kinase from Thermoanaerobacter pseudethanolicus (strain ATCC 33223 / 39E) (Clostridium thermohydrosulfuricum).